A 320-amino-acid chain; its full sequence is Ferrochelatase (320 aa).

H194 and E275 together coordinate Fe cation.

It belongs to the ferrochelatase family.

Its subcellular location is the cytoplasm. The enzyme catalyses heme b + 2 H(+) = protoporphyrin IX + Fe(2+). The protein operates within porphyrin-containing compound metabolism; protoheme biosynthesis; protoheme from protoporphyrin-IX: step 1/1. Its function is as follows. Catalyzes the ferrous insertion into protoporphyrin IX. The polypeptide is Ferrochelatase (Xylella fastidiosa (strain 9a5c)).